The following is a 449-amino-acid chain: L-seryl-tRNA(Sec) selenium transferase (449 aa).

K286 carries the post-translational modification N6-(pyridoxal phosphate)lysine.

Belongs to the SelA family. The cofactor is pyridoxal 5'-phosphate.

Its subcellular location is the cytoplasm. It catalyses the reaction L-seryl-tRNA(Sec) + selenophosphate + H(+) = L-selenocysteinyl-tRNA(Sec) + phosphate. It participates in aminoacyl-tRNA biosynthesis; selenocysteinyl-tRNA(Sec) biosynthesis; selenocysteinyl-tRNA(Sec) from L-seryl-tRNA(Sec) (bacterial route): step 1/1. Functionally, converts seryl-tRNA(Sec) to selenocysteinyl-tRNA(Sec) required for selenoprotein biosynthesis. In Sulfurimonas denitrificans (strain ATCC 33889 / DSM 1251) (Thiomicrospira denitrificans (strain ATCC 33889 / DSM 1251)), this protein is L-seryl-tRNA(Sec) selenium transferase.